Here is a 494-residue protein sequence, read N- to C-terminus: Guanosine-5'-triphosphate,3'-diphosphate pyrophosphatase (494 aa).

It belongs to the GppA/Ppx family. GppA subfamily.

The enzyme catalyses guanosine 3'-diphosphate 5'-triphosphate + H2O = guanosine 3',5'-bis(diphosphate) + phosphate + H(+). It functions in the pathway purine metabolism; ppGpp biosynthesis; ppGpp from GTP: step 2/2. Its function is as follows. Catalyzes the conversion of pppGpp to ppGpp. Guanosine pentaphosphate (pppGpp) is a cytoplasmic signaling molecule which together with ppGpp controls the 'stringent response', an adaptive process that allows bacteria to respond to amino acid starvation, resulting in the coordinated regulation of numerous cellular activities. The protein is Guanosine-5'-triphosphate,3'-diphosphate pyrophosphatase of Citrobacter koseri (strain ATCC BAA-895 / CDC 4225-83 / SGSC4696).